Here is a 424-residue protein sequence, read N- to C-terminus: Tyrosine--tRNA ligase (424 aa).

Tyr37 is an L-tyrosine binding site. The 'HIGH' region signature appears at 42-51; the sequence is PTADSLHLGH. Lys144 carries the post-translational modification N6-acetyllysine. Residues Tyr175 and Gln179 each coordinate L-tyrosine. The 'KMSKS' region signature appears at 235–239; the sequence is KFGKT. ATP is bound at residue Lys238. In terms of domain architecture, S4 RNA-binding spans 357-414; that stretch reads ADLMQALVDSELQPSRGQARKTIASNAITINGEKQSDPEYFFKEEDRLFGRFTLLRRG.

The protein belongs to the class-I aminoacyl-tRNA synthetase family. TyrS type 1 subfamily. As to quaternary structure, homodimer.

It localises to the cytoplasm. The catalysed reaction is tRNA(Tyr) + L-tyrosine + ATP = L-tyrosyl-tRNA(Tyr) + AMP + diphosphate + H(+). Catalyzes the attachment of tyrosine to tRNA(Tyr) in a two-step reaction: tyrosine is first activated by ATP to form Tyr-AMP and then transferred to the acceptor end of tRNA(Tyr). The polypeptide is Tyrosine--tRNA ligase (Escherichia coli (strain K12 / DH10B)).